A 370-amino-acid polypeptide reads, in one-letter code: Probable butyrate kinase (370 aa).

It belongs to the acetokinase family.

The protein localises to the cytoplasm. The catalysed reaction is butanoate + ATP = butanoyl phosphate + ADP. This Elusimicrobium minutum (strain Pei191) protein is Probable butyrate kinase.